Consider the following 124-residue polypeptide: Ribonuclease pancreatic (124 aa).

Positions Lys1–Ile13 are enriched in basic and acidic residues. The interval Lys1 to Ser23 is disordered. Substrate contacts are provided by Lys7 and Arg10. The Proton acceptor role is filled by His12. Intrachain disulfides connect Cys26–Cys84, Cys40–Cys95, Cys58–Cys110, and Cys65–Cys72. Asn34 carries an N-linked (GlcNAc...) asparagine glycan. Substrate is bound by residues Lys41–Thr45, Lys66, and Arg85. Catalysis depends on His119, which acts as the Proton donor.

Belongs to the pancreatic ribonuclease family. As to quaternary structure, monomer. Interacts with and forms tight 1:1 complexes with RNH1. Dimerization of two such complexes may occur. Interaction with RNH1 inhibits this protein. As to expression, pancreas.

Its subcellular location is the secreted. The catalysed reaction is an [RNA] containing cytidine + H2O = an [RNA]-3'-cytidine-3'-phosphate + a 5'-hydroxy-ribonucleotide-3'-[RNA].. It catalyses the reaction an [RNA] containing uridine + H2O = an [RNA]-3'-uridine-3'-phosphate + a 5'-hydroxy-ribonucleotide-3'-[RNA].. In terms of biological role, endonuclease that catalyzes the cleavage of RNA on the 3' side of pyrimidine nucleotides. Acts on single-stranded and double-stranded RNA. The protein is Ribonuclease pancreatic (RNASE1) of Giraffa camelopardalis (Giraffe).